We begin with the raw amino-acid sequence, 232 residues long: Enolase-phosphatase E1 (232 aa).

Belongs to the HAD-like hydrolase superfamily. MasA/MtnC family. Monomer. Mg(2+) serves as cofactor.

The catalysed reaction is 5-methylsulfanyl-2,3-dioxopentyl phosphate + H2O = 1,2-dihydroxy-5-(methylsulfanyl)pent-1-en-3-one + phosphate. It functions in the pathway amino-acid biosynthesis; L-methionine biosynthesis via salvage pathway; L-methionine from S-methyl-5-thio-alpha-D-ribose 1-phosphate: step 3/6. The protein operates within amino-acid biosynthesis; L-methionine biosynthesis via salvage pathway; L-methionine from S-methyl-5-thio-alpha-D-ribose 1-phosphate: step 4/6. Bifunctional enzyme that catalyzes the enolization of 2,3-diketo-5-methylthiopentyl-1-phosphate (DK-MTP-1-P) into the intermediate 2-hydroxy-3-keto-5-methylthiopentenyl-1-phosphate (HK-MTPenyl-1-P), which is then dephosphorylated to form the acireductone 1,2-dihydroxy-3-keto-5-methylthiopentene (DHK-MTPene). The chain is Enolase-phosphatase E1 from Xanthomonas campestris pv. campestris (strain B100).